The following is a 1157-amino-acid chain: Endo-1,4-beta-xylanase A (1157 aa).

The first 33 residues, 1-33, serve as a signal peptide directing secretion; it reads MMKNNVDRIVSIVTALIMIFGASLFSPPIRVFA. 2 CBM-cenC domains span residues 38–189 and 195–343; these read INLV…VTTQ and GNVI…VIGE. The region spanning 352-675 is the GH10 domain; that stretch reads QNDIPDLYSV…KPAFWAVVDP (324 aa). Residue Glu495 is the Proton donor of the active site. Residue Asp537 is part of the active site. The Nucleophile role is filled by Glu600. SLH domains lie at 1051–1114 and 1115–1157; these read KKGV…YSGE and FSDV…EMTQ.

This sequence belongs to the glycosyl hydrolase 10 (cellulase F) family.

It carries out the reaction Endohydrolysis of (1-&gt;4)-beta-D-xylosidic linkages in xylans.. It participates in glycan degradation; xylan degradation. Endo-acting enzyme that randomly cleaves the internal xylosidic linkages of the xylan backbone, yielding xylooligosaccharides of various lengths which are further hydrolyzed to xylose molecules by beta-xylosidase (EC 3.2.1.37). Requires at least three xylose residues for catalytic activity. Does not have activity against xylobiose. This chain is Endo-1,4-beta-xylanase A (xynA), found in Thermoanaerobacterium saccharolyticum.